Reading from the N-terminus, the 521-residue chain is MKTAHWADFYAEKIKKEKGPKNIYTVASGITPSGTVHIGNFREVISVDLVARALKDSGSQVRFIYSWDNYDVFRKVPKNMPEQELLTTYLRQAITRVPDTRGYKTSYARANEIEFEKYLPIVGINPEFIDQSKKYTNSTYASQIKFALNHKKELAEALNEYRTSKLEENWYPISIFCTKCNRDTTTVNNYDNHYSVKYSCECGNQESLDIRTTWAIKLPWRIDWPMRWKYEKVDFEPAGKDHHSSGGSFDTSKNIVKIFQGSPPVTFQYDFISIKGRGGKISSSLGDVISLKDVLEIYTPEVTRFLFAATKPNTEFSISFDLDVIKIYEDYDRFERIYYGVEDIKEEKKRSFKRIYELSQPYMPSKRIPYQIGFRHLSVICQIFENNINKILNYLKNVQDDQKDKLINKIKCVINWIKDFAPEDFKFLLRSKFDNIEILKEDNKKAISELLDSLKKNFEVATEQDIQNEIYKISRENNIEPALFFKQIYKILIDKEKGPKLAGFIKIIGIDRFEKIVSKYI.

The 'HIGH' region signature appears at 32–40; it reads PSGTVHIGN. Residues 280 to 284 carry the 'KMSKS' region motif; it reads KISSS.

It belongs to the class-I aminoacyl-tRNA synthetase family.

It is found in the cytoplasm. The catalysed reaction is tRNA(Lys) + L-lysine + ATP = L-lysyl-tRNA(Lys) + AMP + diphosphate. The chain is Lysine--tRNA ligase from Borrelia garinii subsp. bavariensis (strain ATCC BAA-2496 / DSM 23469 / PBi) (Borreliella bavariensis).